Consider the following 2860-residue polypeptide: Methylcytosine dioxygenase TET (2860 aa).

2 disordered regions span residues 51–255 (HYTT…PHLQ) and 457–562 (GQPH…DAVS). Positions 57–70 (HHPHSHSHPHHHYQ) are enriched in basic residues. Composition is skewed to low complexity over residues 71–181 (QHYP…AASG) and 191–231 (ANAN…SNGS). Positions 468–482 (TPTSYDGNNSNNSYP) are enriched in polar residues. 2 stretches are compositionally biased toward low complexity: residues 492–508 (HTPHTTTTQPTPTTTTP) and 536–546 (SLESSAESEAS). The CXXC-type zinc-finger motif lies at 591 to 631 (SKKKRKRCGECVGCQRKDNCGECAPCRNDKSHQICKQRRCE). C598, C601, C604, C610, C613, C616, C625, and C630 together coordinate Zn(2+). 7 disordered regions span residues 641 to 734 (GADG…NLQQ), 771 to 810 (QHFQQQQQQHLQQQHAQQQHLPQQQHQITAQIQTMKDQPQ), 920 to 1113 (QVSA…EGYA), 1130 to 1155 (RKSDPKDPPPDLQQQPQQVQQQQQTG), 1170 to 1195 (LSANGPSSATPTHPLPNLQQQQQQVQ), 1209 to 1356 (AVGG…HSQY), and 1437 to 1460 (GYQHSTYGARGKPPANQPHQIHGH). Over residues 692-706 (TKANKLNAAAASATS) the composition is skewed to low complexity. Residues 718–732 (LPQQSPNTTSATGNL) are compositionally biased toward polar residues. Low complexity-rich tracts occupy residues 771 to 804 (QHFQQQQQQHLQQQHAQQQHLPQQQHQITAQIQT), 930 to 942 (QQQQQQQQQQQQQ), and 985 to 1021 (ATNSNSNNNSSSNTSNTNNSNASNNNATTVVSGGTTT). Positions 1040 to 1054 (PNQAVPQSPTRSNML) are enriched in polar residues. Residues 1076–1085 (QQQQQQQQQQ) show a composition bias toward low complexity. The span at 1086–1097 (HLSSPPMQDWNW) shows a compositional bias: polar residues. The segment covering 1141–1153 (LQQQPQQVQQQQQ) has biased composition (low complexity). 2 stretches are compositionally biased toward low complexity: residues 1248-1263 (QDAQLQLQLQQHQPGQ) and 1299-1312 (SRAAAAAAAAAEAA). Residues 1337–1349 (PPHPHAAGGPPPG) are compositionally biased toward pro residues. C1638, C1640, C1699, H1725, and C1727 together coordinate Zn(2+). An interaction with wds region spans residues 1657-2666 (LGTASSLMDL…RMTLIFYQHR (1010 aa)). 2-oxoglutarate is bound at residue R1767. Residues C1777, C1779, C1795, C1804, and C1862 each contribute to the Zn(2+) site. C1878 contributes to the 2-oxoglutarate binding site. H1884 is a binding site for Zn(2+). Residues H1886 and D1888 each coordinate Fe cation. N1891 provides a ligand contact to substrate. H1919 serves as a coordination point for 2-oxoglutarate. Disordered regions lie at residues 1966–2115 (PCRR…LMSS), 2198–2229 (LTPSTPTAQPQLGVPPATSIAGGTTTGAPTGA), 2263–2334 (SNLT…NLTE), 2350–2371 (APLTTSHHPQEGFVKPKPPPSD), 2422–2444 (MYPQQTPPPTPPPPSPNWNMYGH), and 2536–2598 (LPDL…NSTK). Over residues 1979-1989 (EAAPPDGDQDA) the composition is skewed to acidic residues. 2 stretches are compositionally biased toward low complexity: residues 1993-2015 (ANSQSSSSNGAQSQTQANNQQSS) and 2029-2059 (GNGVNANGASSKSKGKGKSNQSNNSSASTPG). The segment covering 2069–2086 (RCQTPVTNNPSPAGSAFS) has biased composition (polar residues). Low complexity predominate over residues 2212 to 2229 (PPATSIAGGTTTGAPTGA). The segment covering 2263–2275 (SNLTNPGGVTTEV) has biased composition (polar residues). Low complexity predominate over residues 2276–2285 (QQQHQQAQQQ). Residues 2290-2304 (GGVGPGGLPVVGGAP) are compositionally biased toward gly residues. The segment covering 2426–2437 (QTPPPTPPPPSP) has biased composition (pro residues). Over residues 2540–2562 (SNGQTNSDTVATPTPTGDSSSND) the composition is skewed to polar residues. Positions 2570 to 2594 (AGNQAPASGAGAATTAPPIASPGST) are enriched in low complexity. H2642 is a binding site for Fe cation. 2657-2659 (RMT) lines the 2-oxoglutarate pocket. Position 2663-2665 (2663-2665 (YQH)) interacts with substrate. H2673 contacts Zn(2+). The tract at residues 2729 to 2860 (KESSANGQQL…HQQLPQQQQT (132 aa)) is disordered. The segment covering 2732–2742 (SANGQQLKNGA) has biased composition (polar residues). Positions 2750–2768 (SSDSKKSQANEQSKNEKVA) are enriched in basic and acidic residues. Low complexity-rich tracts occupy residues 2772-2785 (PTLTTTSWTTLFPT) and 2798-2821 (NSSPTSSTNNAPNGGGCPAQQQQH). Positions 2822-2849 (LPPPPGSGLIHPPPGTPTGTAAPPPLPT) are enriched in pro residues. Residues 2850 to 2860 (PHQQLPQQQQT) show a composition bias toward low complexity.

Belongs to the TET family. Interacts (via C-terminus) with wds (via WD repeats). Fe(2+) serves as cofactor. Zn(2+) is required as a cofactor. In terms of tissue distribution, expressed in brain (at protein level).

The protein localises to the chromosome. The catalysed reaction is an N(6)-methyl-2'-deoxyadenosine in DNA + 2-oxoglutarate + O2 = a 2'-deoxyadenosine in DNA + formaldehyde + succinate + CO2. It carries out the reaction a 5-methyl-2'-deoxycytidine in DNA + 2-oxoglutarate + O2 = a 5-hydroxymethyl-2'-deoxycytidine in DNA + succinate + CO2. It catalyses the reaction a 5-hydroxymethyl-2'-deoxycytidine in DNA + 2-oxoglutarate + O2 = a 5-formyl-2'-deoxycytidine in DNA + succinate + CO2 + H2O. The enzyme catalyses a 5-formyl-2'-deoxycytidine in DNA + 2-oxoglutarate + O2 = a 5-carboxyl-2'-deoxycytidine in DNA + succinate + CO2 + H(+). Dioxygenase that specifically demethylates DNA methylated on the 6th position of adenine (N(6)-methyladenosine) DNA. N(6)-methyladenosine (m6A) DNA is present at a relatively high level at the very earliest embryonic stages but at low levels at the late embryonic stages and may act as a regulator of gene expression. Promotes differentiation of early germ cells in ovary. Contributes to neuronal morphology, development, and function in the brain. By interacting with histone modifier wds, binds to a specific set of genes, modulates intragenic (N(6)-methyladenosine) DNA levels and thereby maintains transcriptional activation. Also able to catalyze the conversion of the modified genomic base 5-methylcytosine (5mC) into 5-hydroxymethylcytosine (5hmC). The protein is Methylcytosine dioxygenase TET of Drosophila melanogaster (Fruit fly).